A 258-amino-acid polypeptide reads, in one-letter code: Acyl-[acyl-carrier-protein]--UDP-N-acetylglucosamine O-acyltransferase (258 aa).

This sequence belongs to the transferase hexapeptide repeat family. LpxA subfamily. In terms of assembly, homotrimer.

It localises to the cytoplasm. It catalyses the reaction a (3R)-hydroxyacyl-[ACP] + UDP-N-acetyl-alpha-D-glucosamine = a UDP-3-O-[(3R)-3-hydroxyacyl]-N-acetyl-alpha-D-glucosamine + holo-[ACP]. It participates in glycolipid biosynthesis; lipid IV(A) biosynthesis; lipid IV(A) from (3R)-3-hydroxytetradecanoyl-[acyl-carrier-protein] and UDP-N-acetyl-alpha-D-glucosamine: step 1/6. Functionally, involved in the biosynthesis of lipid A, a phosphorylated glycolipid that anchors the lipopolysaccharide to the outer membrane of the cell. The protein is Acyl-[acyl-carrier-protein]--UDP-N-acetylglucosamine O-acyltransferase of Pseudomonas putida (strain GB-1).